Consider the following 111-residue polypeptide: uncharacterized protein (111 aa).

Belongs to the asfivirus E111R family.

This is an uncharacterized protein from Ornithodoros (relapsing fever ticks).